Here is a 662-residue protein sequence, read N- to C-terminus: ATP-dependent RNA helicase DDX3X (662 aa).

S2 carries the post-translational modification N-acetylserine. The tract at residues S2–P139 is required for TBK1 and IKBKE-dependent IFNB1 activation. The Nuclear export signal signature appears at L12–L21. Residues L19–E144 are disordered. Positions L21–S34 are enriched in polar residues. The interaction with EIF4E stretch occupies residues Y38–R44. A compositionally biased stretch (basic and acidic residues) spans R44 to A68. K55 bears the N6-acetyllysine mark. A compositionally biased stretch (low complexity) spans S70–G89. Positions K81 to S90 are interaction with VACV protein K7. Phosphoserine is present on residues S82, S86, and S90. The interval R88–G123 is involved in binding to RNA G-quadruplex. Basic and acidic residues predominate over residues G94–K130. Positions G100–R110 are interaction with IKBKE. The segment at G100–N662 is interaction with GSK3B. R101 is modified (omega-N-methylarginine). S102 carries the post-translational modification Phosphoserine; by IKKE. A Phosphotyrosine modification is found at Y104. Omega-N-methylarginine is present on R110. K118 bears the N6-acetyllysine mark. Phosphoserine is present on S131. The segment at P139–G172 is interaction with CHUK. The short motif at E180–K208 is the Q motif element. S181 is subject to Phosphoserine; by TBK1; in vitro. At S183 the chain carries Phosphoserine; by TBK1. An ATP-binding site is contributed by Y200–Q207. Residues I211–L403 enclose the Helicase ATP-binding domain. K215 participates in a covalent cross-link: Glycyl lysine isopeptide (Lys-Gly) (interchain with G-Cter in SUMO2). Residue A224–T231 participates in ATP binding. S240 carries the post-translational modification Phosphoserine; by TBK1; in vitro. Residues A250–R259 form an involved in stimulation of ATPase activity by DNA and RNA, nucleic acid binding and unwinding and HIV-1 replication region. At S269 the chain carries Phosphoserine; by TBK1; in vitro. Positions D347–D350 match the DEAD box motif. Positions G409 to N662 are interaction with HCV core protein. Residues N414–A575 form the Helicase C-terminal domain. At S429 the chain carries Phosphoserine; by CSNK1E and TBK1; in vitro. Phosphothreonine; by TBK1; in vitro is present on T438. Residues S442 and S456 each carry the phosphoserine; by TBK1; in vitro modification. Phosphothreonine; by CSNK1E; in vitro is present on T469. At S470 the chain carries Phosphoserine; by CSNK1E; in vitro. Position 520 is a phosphoserine; by TBK1; in vitro (S520). The interaction with NXF1 stretch occupies residues G536–G661. Position 542 is a phosphothreonine; by TBK1; in vitro (T542). S543 carries the phosphoserine; by CSNK1E and TBK1; in vitro modification. Omega-N-methylarginine is present on R592. S594, S605, and S612 each carry phosphoserine. The interval D601 to F634 is disordered. Over residues Q604–R622 the composition is skewed to low complexity. R617 and R632 each carry omega-N-methylarginine. Over residues S623–F634 the composition is skewed to gly residues.

The protein belongs to the DEAD box helicase family. DDX3/DED1 subfamily. Homodimer; can bind RNA as a monomer and as a dimer/oligomer. Interacts with TDRD3. Interacts (when phosphorylated at Ser-102) with IRF3; the interaction facilitates the phosphorylation and activation of IRF3 by IKBKE. Directly interacts with XPO1/CRM1. The interaction with XPO1/CMR1 is dependent on the DDX3X nuclear export signal motif and XPO1 interaction with GTPase RAN in its active GTP-bound form. Weakly interacts with TBKBP1/SINTBAD. Directly interacts with TRAF3; this interaction stimulates TRAF3 'Lys-63' ubiquitination. Interacts with CSNK1E in a Wnt-dependent manner; this interaction greatly enhances CSNK1E affinity for ATP, stimulates its kinase activity and promotes CSNK1E-mediated DVL2 phosphorylation. In the presence of RNA, the interaction is decreased. Also interacts with CSNK1D and stimulates its kinase activity. Interacts with TRPV4; this interaction is decreased when the TRPV4 channel is activated, leading to DDX3X relocalization to the nucleus. Interacts with MAP3K14/NIK. Directly interacts with CHUK/IKKA after physiological activation of the TLR7 and TLR8 pathways; this interaction enhances CHUK autophosphorylation. May associate with EIF4F complex, composed of at least EIF4A, EIF4E and EIF4G1/EIF4G3. Directly interacts with EIF4E in an RNA-independent manner; this interaction enhances EIF4E cap-binding ability. Directly interacts with EIF4G1 in an RNA-independent manner. DDX3X competes with EIF4G1 for interaction with EIF4E. Interacts with EIF4A1 and EIF2S1 in an RNA-independent manner. Associates with the eukaryotic translation initiation factor 3 (eIF-3) complex, including with EIF3B and EIF3C subunits. Directly interacts with IKBKE/IKKE; this interaction stimulates IKBKE activating autophosphorylation and is induced upon viral infection. Interacts with TBK1. Interacts with SP1; this interaction potentiates SP1-induced CDKN1A/WAF1/CIP1 transcription. Interacts with GSK3A and GSK3B. Interacts with several death receptors, inclusing FAS, TNFRSF10A and TNFRSF10B. Recruited to TNFRSF10B in the absence of receptor stimulation. When TNFRSF10B is stimulated, further recruited to the receptor and cleaved by caspases. A large proteolytic fragment remains associated with TNFRSF10B. Interacts (via C-terminus) with NXF1/TAP; this interaction may be partly involved in DDX3X nuclear export and in NXF1 localization to stress granules. Identified in an mRNP complex, composed of at least DHX9, DDX3X, ELAVL1, HNRNPU, IGF2BP1/2, ILF3, PABPC1, PCBP2, PTBP2, STAU1, STAU2, SYNCRIP and YBX1. The interaction with IGF2BP1/2 is RNA-dependent. Directly interacts with PABPC1/PABP1 in an RNA-independent manner. This interaction increases in stressed cells and decreases during cell recovery. Interacts (via C-terminus) with MAVS/IPS-1; this interaction occurs rapidly, but transiently after Sendai virus infection. The interaction potentiates MAVS-mediated IFNB induction. Interacts with ERCC6/CBS. Interacts with DHX33 in an RNA-independent manner. Interacts with DDX5 in the cytoplasm; this interaction may be more efficient when both proteins are unphosphorylated. Interacts with RIGI/RIG-1. Interacts with IFIH1/MDA5. Interacts with NCAPH; this interaction may be important for the NCAPH localization at condensing chromosomes during mitosis. Interacts with NLRP3 (via NACHT domain) under inflammasome-activating conditions. Interacts with CAPRIN1. Interacts with HNF4A and NR0B2/SHP in an RNA-independent manner; this interaction disrupts the interaction between HNF4 and NR0B2 that forms inactive heterodimers and enhances the formation of active HNF4 homodimers. Interacts with CREBBP/CBP. Interacts with EP300/p300. Interacts with gamma-tubulin. Interacts with phosphorylated TP53. Directly interacts with RELA/p65; this interaction may trap RELA in the cytoplasm, impairing nuclear relocalization upon TNF activating signals. In terms of assembly, (Microbial infection) Interacts with hepatitis B virus (HBV) polymerase in the cytoplasm; this interaction may inhibit DDX3X interaction with the IKBKE/TBK1 complex, and hence impair IKBKE/TBK1-mediated increase in IFNB production. As to quaternary structure, (Microbial infection) Directly interacts with hepatitis C virus (HCV) core protein in the cytoplasm. (Microbial infection) Interacts with vaccinia virus (VACV) protein K7. In terms of assembly, (Microbial infection) Interacts with HIV-1 protein Rev. As to quaternary structure, (Microbial infection) Interacts with Venezuelan equine encephalitis virus non-structural protein 3. Post-translationally, phosphorylated by TBK1; the phosphorylation is required for the synergistic induction of IFNB mediated by TBK1 and DDX3X. Phosphorylated by IKBKE at Ser-102 after ssRNA viral infection; enhances the induction of INFB promoter by IRF3. The cytoplasmic form is highly phosphorylated in the G1/S phase of the cell cycle and much less at G2/M. Phosphorylation by CSNK1E may inhibit RNA-stimulated ATPase activity. In terms of processing, upon stimulation of death receptors, including TNFRSF10B, recruited to receptors and cleaved by caspases. Proteolytic fragments remain associated with the receptors. This cleavage presumably inactivates DDX3X anti-apoptotic function. Ubiquitinated by RNF39 via 'Lys-48'-linked ubiquitination; leading to proteasomal degradation. In terms of tissue distribution, widely expressed. In testis, expressed in spermatids. Expressed in epidermis and liver (at protein level).

It is found in the cell membrane. The protein resides in the nucleus. It localises to the cytoplasm. Its subcellular location is the stress granule. The protein localises to the inflammasome. It is found in the cell projection. The protein resides in the lamellipodium. It localises to the cytoskeleton. Its subcellular location is the microtubule organizing center. The protein localises to the centrosome. It catalyses the reaction ATP + H2O = ADP + phosphate + H(+). Functionally, multifunctional ATP-dependent RNA helicase. The ATPase activity can be stimulated by various ribo-and deoxynucleic acids indicative for a relaxed substrate specificity. In vitro can unwind partially double-stranded DNA with a preference for 5'-single-stranded DNA overhangs. Binds RNA G-quadruplex (rG4s) structures, including those located in the 5'-UTR of NRAS mRNA. Involved in many cellular processes, which do not necessarily require its ATPase/helicase catalytic activities. Involved in transcription regulation. Positively regulates CDKN1A/WAF1/CIP1 transcription in an SP1-dependent manner, hence inhibits cell growth. This function requires its ATPase, but not helicase activity. CDKN1A up-regulation may be cell-type specific. Binds CDH1/E-cadherin promoter and represses its transcription. Potentiates HNF4A-mediated MTTP transcriptional activation; this function requires ATPase, but not helicase activity. Facilitates HNF4A acetylation, possibly catalyzed by CREBBP/EP300, thereby increasing the DNA-binding affinity of HNF4 to its response element. In addition, disrupts the interaction between HNF4 and SHP that forms inactive heterodimers and enhances the formation of active HNF4 homodimers. By promoting HNF4A-induced MTTP expression, may play a role in lipid homeostasis. May positively regulate TP53 transcription. Associates with mRNPs, predominantly with spliced mRNAs carrying an exon junction complex (EJC). Involved in the regulation of translation initiation. Not involved in the general process of translation, but promotes efficient translation of selected complex mRNAs, containing highly structured 5'-untranslated regions (UTR). This function depends on helicase activity. Might facilitate translation by resolving secondary structures of 5'-UTRs during ribosome scanning. Alternatively, may act prior to 43S ribosomal scanning and promote 43S pre-initiation complex entry to mRNAs exhibiting specific RNA motifs, by performing local remodeling of transcript structures located close to the cap moiety. Independently of its ATPase activity, promotes the assembly of functional 80S ribosomes and disassembles from ribosomes prior to the translation elongation process. Positively regulates the translation of cyclin E1/CCNE1 mRNA and consequently promotes G1/S-phase transition during the cell cycle. May activate TP53 translation. Required for endoplasmic reticulum stress-induced ATF4 mRNA translation. Independently of its ATPase/helicase activity, enhances IRES-mediated translation; this activity requires interaction with EIF4E. Independently of its ATPase/helicase activity, has also been shown specifically repress cap-dependent translation, possibly by acting on translation initiation factor EIF4E. Involved in innate immunity, acting as a viral RNA sensor. Binds viral RNAs and promotes the production of type I interferon (IFN-alpha and IFN-beta). Potentiate MAVS/RIGI-mediated induction of IFNB in early stages of infection. Enhances IFNB1 expression via IRF3/IRF7 pathway and participates in NFKB activation in the presence of MAVS and TBK1. Involved in TBK1 and IKBKE-dependent IRF3 activation leading to IFNB induction, acts as a scaffolding adapter that links IKBKE and IRF3 and coordinates their activation. Involved in the TLR7/TLR8 signaling pathway leading to type I interferon induction, including IFNA4 production. In this context, acts as an upstream regulator of IRF7 activation by MAP3K14/NIK and CHUK/IKKA. Stimulates CHUK autophosphorylation and activation following physiological activation of the TLR7 and TLR8 pathways, leading to MAP3K14/CHUK-mediated activatory phosphorylation of IRF7. Also stimulates MAP3K14/CHUK-dependent NF-kappa-B signaling. Negatively regulates TNF-induced IL6 and IL8 expression, via the NF-kappa-B pathway. May act by interacting with RELA/p65 and trapping it in the cytoplasm. May also bind IFNB promoter; the function is independent of IRF3. Involved in both stress and inflammatory responses. Independently of its ATPase/helicase activity, required for efficient stress granule assembly through its interaction with EIF4E, hence promotes survival in stressed cells. Independently of its helicase activity, regulates NLRP3 inflammasome assembly through interaction with NLRP3 and hence promotes cell death by pyroptosis during inflammation. This function is independent of helicase activity. Therefore DDX3X availability may be used to interpret stress signals and choose between pro-survival stress granules and pyroptotic NLRP3 inflammasomes and serve as a live-or-die checkpoint in stressed cells. In association with GSK3A/B, negatively regulates extrinsic apoptotic signaling pathway via death domain receptors, including TNFRSF10B, slowing down the rate of CASP3 activation following death receptor stimulation. Cleavage by caspases may inactivate DDX3X and relieve the inhibition. Independently of its ATPase/helicase activity, allosteric activator of CSNK1E. Stimulates CSNK1E-mediated phosphorylation of DVL2, thereby involved in the positive regulation of Wnt/beta-catenin signaling pathway. Also activates CSNK1A1 and CSNK1D in vitro, but it is uncertain if these targets are physiologically relevant. ATPase and casein kinase-activating functions are mutually exclusive. May be involved in mitotic chromosome segregation. (Microbial infection) Facilitates hepatitis C virus (HCV) replication. During infection, HCV core protein inhibits the interaction between MAVS and DDX3X and therefore impairs MAVS-dependent INFB induction and might recruit DDX3X to HCV replication complex. In terms of biological role, (Microbial infection) Facilitates HIV-1 replication. Acts as a cofactor for XPO1-mediated nuclear export of HIV-1 Rev RNAs. This function is strongly stimulated in the presence of TBK1 and requires DDX3X ATPase activity. Its function is as follows. (Microbial infection) Facilitates Zika virus (ZIKV) replication. Functionally, (Microbial infection) Facilitates Dengue virus (DENV) replication. (Microbial infection) Facilitates Venezuelan equine encephalitis virus (VEEV) replication. This Homo sapiens (Human) protein is ATP-dependent RNA helicase DDX3X (DDX3X).